The chain runs to 492 residues: 2,3-bisphosphoglycerate-independent phosphoglycerate mutase (492 aa).

The Mn(2+) site is built by Asp-11 and Ser-61. The active-site Phosphoserine intermediate is the Ser-61. Substrate contacts are provided by residues His-118, 147-148, Arg-178, Arg-184, 248-251, and Lys-320; these read RD and RNDR. Residues Asp-386, His-390, Asp-427, His-428, and His-445 each coordinate Mn(2+).

The protein belongs to the BPG-independent phosphoglycerate mutase family. In terms of assembly, monomer. Mn(2+) is required as a cofactor.

The enzyme catalyses (2R)-2-phosphoglycerate = (2R)-3-phosphoglycerate. It functions in the pathway carbohydrate degradation; glycolysis; pyruvate from D-glyceraldehyde 3-phosphate: step 3/5. Functionally, catalyzes the interconversion of 2-phosphoglycerate and 3-phosphoglycerate. The chain is 2,3-bisphosphoglycerate-independent phosphoglycerate mutase from Campylobacter jejuni subsp. jejuni serotype O:2 (strain ATCC 700819 / NCTC 11168).